Consider the following 727-residue polypeptide: Kinesin-like protein KIN-14G (727 aa).

Disordered stretches follow at residues 100–156, 172–194, and 336–357; these read QTAP…LHLR, HLSA…SCSR, and LAGG…GATR. Positions 114–133 are enriched in polar residues; it reads VASSTAGRASRTKSASSTGR. One can recognise a Kinesin motor domain in the interval 381 to 710; the sequence is NIRVFCRVRP…LRFAARVNSC (330 aa). 461–468 contacts ATP; the sequence is GQTGSGKT.

Belongs to the TRAFAC class myosin-kinesin ATPase superfamily. Kinesin family. KIN-14 subfamily.

The sequence is that of Kinesin-like protein KIN-14G from Oryza sativa subsp. japonica (Rice).